Here is a 372-residue protein sequence, read N- to C-terminus: Carbamoyl phosphate synthase small chain (372 aa).

The segment at 1-179 (MRAILALEDG…ALVTGKTLPP (179 aa)) is CPSase. L-glutamine is bound by residues serine 45, glycine 231, and glycine 233. The 187-residue stretch at 183 to 369 (DIVAFDFGIK…RKMIAASKRQ (187 aa)) folds into the Glutamine amidotransferase type-1 domain. Cysteine 258 functions as the Nucleophile in the catalytic mechanism. L-glutamine-binding residues include leucine 259, glutamine 262, asparagine 300, glycine 302, and phenylalanine 303. Catalysis depends on residues histidine 342 and glutamate 344.

This sequence belongs to the CarA family. As to quaternary structure, composed of two chains; the small (or glutamine) chain promotes the hydrolysis of glutamine to ammonia, which is used by the large (or ammonia) chain to synthesize carbamoyl phosphate. Tetramer of heterodimers (alpha,beta)4.

The enzyme catalyses hydrogencarbonate + L-glutamine + 2 ATP + H2O = carbamoyl phosphate + L-glutamate + 2 ADP + phosphate + 2 H(+). It carries out the reaction L-glutamine + H2O = L-glutamate + NH4(+). Its pathway is amino-acid biosynthesis; L-arginine biosynthesis; carbamoyl phosphate from bicarbonate: step 1/1. The protein operates within pyrimidine metabolism; UMP biosynthesis via de novo pathway; (S)-dihydroorotate from bicarbonate: step 1/3. Its function is as follows. Small subunit of the glutamine-dependent carbamoyl phosphate synthetase (CPSase). CPSase catalyzes the formation of carbamoyl phosphate from the ammonia moiety of glutamine, carbonate, and phosphate donated by ATP, constituting the first step of 2 biosynthetic pathways, one leading to arginine and/or urea and the other to pyrimidine nucleotides. The small subunit (glutamine amidotransferase) binds and cleaves glutamine to supply the large subunit with the substrate ammonia. This is Carbamoyl phosphate synthase small chain from Akkermansia muciniphila (strain ATCC BAA-835 / DSM 22959 / JCM 33894 / BCRC 81048 / CCUG 64013 / CIP 107961 / Muc).